The sequence spans 192 residues: Phosphoheptose isomerase (192 aa).

In terms of domain architecture, SIS spans leucine 37–lysine 192. Asparagine 52–glycine 54 contributes to the substrate binding site. Histidine 61 and glutamate 65 together coordinate Zn(2+). Substrate is bound by residues glutamate 65, asparagine 93–aspartate 94, serine 119–serine 121, serine 124, and glutamine 172. 2 residues coordinate Zn(2+): glutamine 172 and histidine 180.

It belongs to the SIS family. GmhA subfamily. Homotetramer. Requires Zn(2+) as cofactor.

It is found in the cytoplasm. The catalysed reaction is 2 D-sedoheptulose 7-phosphate = D-glycero-alpha-D-manno-heptose 7-phosphate + D-glycero-beta-D-manno-heptose 7-phosphate. The protein operates within carbohydrate biosynthesis; D-glycero-D-manno-heptose 7-phosphate biosynthesis; D-glycero-alpha-D-manno-heptose 7-phosphate and D-glycero-beta-D-manno-heptose 7-phosphate from sedoheptulose 7-phosphate: step 1/1. Catalyzes the isomerization of sedoheptulose 7-phosphate in D-glycero-D-manno-heptose 7-phosphate. The protein is Phosphoheptose isomerase of Proteus mirabilis (strain HI4320).